Consider the following 989-residue polypeptide: Serine-repeat antigen protein 5 (989 aa).

A signal peptide spans 1 to 16; sequence MKSYISLFFILCVIFN. Disordered regions lie at residues 26 to 91 and 165 to 245; these read SQTG…EKQD and LPSN…RNLQ. Low complexity-rich tracts occupy residues 52 to 87, 167 to 180, and 191 to 225; these read QGST…STSS, SNGT…STGT, and SSSS…SSSS. Ser-167 is modified (phosphoserine). An N-linked (GlcNAc...) asparagine glycan is attached at Asn-168. The interaction with PTKL stretch occupies residues 208–245; the sequence is SSSSSSSSSSSSSSSSSSESLPANGPDSPTVKPPRNLQ. N-linked (GlcNAc...) asparagine glycosylation is present at Asn-310. The segment at 365-382 is interaction with host VTN; sequence YKYLSEDIVSNFKEIKAE. The cysteines at positions 437 and 489 are disulfide-linked. Thr-541 carries the post-translational modification Phosphothreonine. Intrachain disulfides connect Cys-559–Cys-564, Cys-573–Cys-602, Cys-585–Cys-628, Cys-619–Cys-664, and Cys-747–Cys-801. The tract at residues 571 to 989 is thiol-protease-like; sequence NNCISNLQVE…TNNECYFCYV (419 aa). Active-site residues include His-754 and Asn-779. Asn-820 is a glycosylation site (N-linked (GlcNAc...) asparagine). The propeptide at 835–878 is inhibition peptide; the sequence is KASPEFYHNLYFKNFNVGKKNLFSEKEDNENNKKLGNNYIIFGQ. At Ser-858 the chain carries Phosphoserine.

This sequence belongs to the peptidase C1 family. As to quaternary structure, may interact (via C-terminus) with PTKL (via SAM domain). In terms of assembly, interacts (via C-terminus) with human VTN (via hemopexin repeat 2); may form heterotetramers of two VTN and SERA5 P47 heterodimers; the interaction may protect merozoites from phagocytosis by host monocytes; VTN glycosylation appears to be dispensable for the interaction. Monomer. Interacts with kinase CPK1/CDPK1 at the schizont stage. In terms of processing, phosphorylation by CPK1/CDPK1 increases SERA5 protease activity towards a synthetic peptide in vitro. Post-translationally, just prior to merozoite egress from host erythrocytes, proteolytically cleaved into multiple fragments. Cleaved by SUB1 into p47 and p73, p73 is further cleaved by SUB1 into p56 and p18 and p56 is further processed into p50 by an unidentified protease. p47 remains covalently associated with p18 via disulfide bond. p47 can be processed into p25n and p25c by SUB1. p25c and p25n remain associated with p18. Proteolytic processing is essential for merozoite egress from host erythrocytes. The cleavage of the propeptide to produce p50 is necessary for protease activity and to promote merozoite egress.

Its subcellular location is the parasitophorous vacuole. It localises to the secreted. It is found in the cell membrane. In terms of biological role, plays an essential role during the asexual blood stage development by controlling the kinetics of merozoite egress from host erythrocytes. Specifically, prevents premature rupture of the parasitophorous vacuole and host erythrocyte membranes. Its function is as follows. May prevent merozoite phagocytosis by host monocytes via interaction with host VTN at the merozoite surface. Plays a role in parasite growth. Functionally, protease activity is controversial. The chain is Serine-repeat antigen protein 5 from Plasmodium falciparum (isolate CDC / Honduras).